Here is a 342-residue protein sequence, read N- to C-terminus: tRNA N6-adenosine threonylcarbamoyltransferase (342 aa).

Fe cation is bound by residues H115 and H119. Substrate contacts are provided by residues 137–141 (IVSGG), D170, G183, D187, and N276. Residue D304 coordinates Fe cation.

The protein belongs to the KAE1 / TsaD family. It depends on Fe(2+) as a cofactor.

It is found in the cytoplasm. It catalyses the reaction L-threonylcarbamoyladenylate + adenosine(37) in tRNA = N(6)-L-threonylcarbamoyladenosine(37) in tRNA + AMP + H(+). Its function is as follows. Required for the formation of a threonylcarbamoyl group on adenosine at position 37 (t(6)A37) in tRNAs that read codons beginning with adenine. Is involved in the transfer of the threonylcarbamoyl moiety of threonylcarbamoyl-AMP (TC-AMP) to the N6 group of A37, together with TsaE and TsaB. TsaD likely plays a direct catalytic role in this reaction. The chain is tRNA N6-adenosine threonylcarbamoyltransferase from Staphylococcus saprophyticus subsp. saprophyticus (strain ATCC 15305 / DSM 20229 / NCIMB 8711 / NCTC 7292 / S-41).